Here is a 387-residue protein sequence, read N- to C-terminus: Mitochondrial import inner membrane translocase subunit TIM50 (387 aa).

The N-terminal 26 residues, 1–26 (MSAVSVYPMCVRASRGLLRLRQGARC), are a transit peptide targeting the mitochondrion. Residues 27–100 (STAPPLLDVV…QKENTAYAKK (74 aa)) lie on the Mitochondrial matrix side of the membrane. Residues 61 to 93 (LQQQQKSQEQPPPEGEDSGHKQDEQGEDKKQKE) form a disordered region. The span at 77 to 93 (DSGHKQDEQGEDKKQKE) shows a compositional bias: basic and acidic residues. Residues 101-121 (MVLRLAGIMGLGGTVGIVYIF) form a helical membrane-spanning segment. The Mitochondrial intermembrane segment spans residues 122–387 (GSNSVDEQGN…AGRFWSRKQQ (266 aa)). The FCP1 homology domain maps to 178-321 (YYQPPYTLVL…YDLAAFLKTI (144 aa)).

Belongs to the TIM50 family. Component of the TIM23 complex at least composed of timm23, timm17 and timm50.

The protein resides in the mitochondrion inner membrane. Functionally, essential component of the TIM23 complex, a complex that mediates the translocation of transit peptide-containing proteins across the mitochondrial inner membrane. This chain is Mitochondrial import inner membrane translocase subunit TIM50 (timm50), found in Danio rerio (Zebrafish).